A 162-amino-acid chain; its full sequence is Phycoerythrocyanin alpha chain (162 aa).

(15Z)-phycoviolobilin is bound at residue Cys-84.

The protein belongs to the phycobiliprotein family. Heterodimer of an alpha and a beta chain. Contains one covalently linked bilin chromophore.

The protein resides in the cellular thylakoid membrane. In terms of biological role, light-harvesting photosynthetic bile pigment-protein from the phycobiliprotein complex. The polypeptide is Phycoerythrocyanin alpha chain (pecA) (Nostoc sp. (strain PCC 7120 / SAG 25.82 / UTEX 2576)).